We begin with the raw amino-acid sequence, 275 residues long: Formamidopyrimidine-DNA glycosylase (275 aa).

Catalysis depends on Pro2, which acts as the Schiff-base intermediate with DNA. The active-site Proton donor is Glu3. Lys59 functions as the Proton donor; for beta-elimination activity in the catalytic mechanism. Positions 92, 111, and 155 each coordinate DNA. Residues 240–274 form an FPG-type zinc finger; that stretch reads NVYGRAGKACPKCGTTIEKQVLGQRSSYYCPQCQR. The Proton donor; for delta-elimination activity role is filled by Arg264.

Belongs to the FPG family. Monomer. Zn(2+) is required as a cofactor.

It carries out the reaction Hydrolysis of DNA containing ring-opened 7-methylguanine residues, releasing 2,6-diamino-4-hydroxy-5-(N-methyl)formamidopyrimidine.. The enzyme catalyses 2'-deoxyribonucleotide-(2'-deoxyribose 5'-phosphate)-2'-deoxyribonucleotide-DNA = a 3'-end 2'-deoxyribonucleotide-(2,3-dehydro-2,3-deoxyribose 5'-phosphate)-DNA + a 5'-end 5'-phospho-2'-deoxyribonucleoside-DNA + H(+). Its function is as follows. Involved in base excision repair of DNA damaged by oxidation or by mutagenic agents. Acts as a DNA glycosylase that recognizes and removes damaged bases. Has a preference for oxidized purines, such as 7,8-dihydro-8-oxoguanine (8-oxoG). Has AP (apurinic/apyrimidinic) lyase activity and introduces nicks in the DNA strand. Cleaves the DNA backbone by beta-delta elimination to generate a single-strand break at the site of the removed base with both 3'- and 5'-phosphates. The chain is Formamidopyrimidine-DNA glycosylase from Magnetococcus marinus (strain ATCC BAA-1437 / JCM 17883 / MC-1).